The chain runs to 221 residues: Glutathione S-transferase class-mu 26 kDa isozyme 1 (221 aa).

The region spanning 2-82 is the GST N-terminal domain; sequence PAKLGYWKIR…YIADKHGMIG (81 aa). Residues 7–8, 40–44, 53–54, and 66–67 each bind glutathione; these read YW, WFSKK, NL, and QS. One can recognise a GST C-terminal domain in the interval 84 to 202; the sequence is TPEERARVSM…ESNRFIKWPL (119 aa). Tyrosine 110 contributes to the substrate binding site.

It belongs to the GST superfamily. Mu family. In terms of assembly, homodimer.

It carries out the reaction RX + glutathione = an S-substituted glutathione + a halide anion + H(+). Functionally, conjugation of reduced glutathione to a wide number of exogenous and endogenous hydrophobic electrophiles. Its function is as follows. GST isoenzymes appear to play a central role in the parasite detoxification system. Other functions are also suspected including a role in increasing the solubility of haematin in the parasite gut. The sequence is that of Glutathione S-transferase class-mu 26 kDa isozyme 1 from Fasciola hepatica (Liver fluke).